The sequence spans 639 residues: Chaperone protein DnaK (639 aa).

Threonine 197 is subject to Phosphothreonine; by autocatalysis. 2 stretches are compositionally biased toward basic and acidic residues: residues 514–529 and 540–553; these read AEEN…DLVE and GTEK…EKVD. Disordered regions lie at residues 514-554 and 603-639; these read AEEN…KVDP and DKAE…RKRG. Acidic residues predominate over residues 612-633; sequence APEEEERGVDEDIVDADFEDLD.

Belongs to the heat shock protein 70 family.

Functionally, acts as a chaperone. The sequence is that of Chaperone protein DnaK from Jannaschia sp. (strain CCS1).